The following is a 924-amino-acid chain: Lipoxygenase 7, chloroplastic (924 aa).

Residues 1–61 constitute a chloroplast transit peptide; it reads MLRPQLNPSS…GQGSSRVVVV (61 aa). The region spanning 88–218 is the PLAT domain; sequence AVATIKVTVG…VGDEGTPSKR (131 aa). Residues 225-924 enclose the Lipoxygenase domain; that stretch reads TYLPGQTPAG…GMGIPNSTSI (700 aa). Residues 231–315 are disordered; the sequence is TPAGLRSYRK…PKSETRKGNV (85 aa). Composition is skewed to basic and acidic residues over residues 239–262 and 302–315; these read RKNDLQQKRGDGTGEREADDRVYD and SKKDPKSETRKGNV. The Fe cation site is built by histidine 581, histidine 586, histidine 773, asparagine 777, and isoleucine 924.

Belongs to the lipoxygenase family. Fe cation is required as a cofactor.

It localises to the plastid. The protein resides in the chloroplast. The enzyme catalyses (9Z,12Z)-octadecadienoate + O2 = (13S)-hydroperoxy-(9Z,11E)-octadecadienoate. The catalysed reaction is (9Z,12Z,15Z)-octadecatrienoate + O2 = (13S)-hydroperoxy-(9Z,11E,15Z)-octadecatrienoate. Its pathway is lipid metabolism; oxylipin biosynthesis. Functionally, plant lipoxygenase may be involved in a number of diverse aspects of plant physiology including growth and development, pest resistance, and senescence or responses to wounding. This lipoxygenase introduces molecular oxygen exclusively into the C-13 position of linoleic and linolenic acids. This Oryza sativa subsp. japonica (Rice) protein is Lipoxygenase 7, chloroplastic (CM-LOX1).